The following is a 676-amino-acid chain: UvrABC system protein C (676 aa).

Residues Val16–Ile95 form the GIY-YIG domain. Positions Asp208–Ala243 constitute a UVR domain.

The protein belongs to the UvrC family. In terms of assembly, interacts with UvrB in an incision complex.

Its subcellular location is the cytoplasm. In terms of biological role, the UvrABC repair system catalyzes the recognition and processing of DNA lesions. UvrC both incises the 5' and 3' sides of the lesion. The N-terminal half is responsible for the 3' incision and the C-terminal half is responsible for the 5' incision. The protein is UvrABC system protein C of Mycobacterium sp. (strain JLS).